The primary structure comprises 61 residues: Alpha-conotoxine-like Am1.3 (61 aa).

Residues 1-21 (MGMRMMFTVFLLVVLATTVVS) form the signal peptide. Residues 22–44 (FMSGRASHGRNAAASDLIALTIK) constitute a propeptide that is removed on maturation. At Cys-60 the chain carries Cysteine amide.

This sequence belongs to the conotoxin A superfamily. Is not hydroxylated. Post-translationally, contains 2 disulfide bonds. As to expression, expressed by the venom duct.

It is found in the secreted. Alpha-conotoxins act on postsynaptic membranes, they bind to the nicotinic acetylcholine receptors (nAChR) and thus inhibit them. This Conus amadis (Amadis cone) protein is Alpha-conotoxine-like Am1.3.